The chain runs to 155 residues: Ribosome maturation factor RimP (155 aa).

The protein belongs to the RimP family.

The protein localises to the cytoplasm. In terms of biological role, required for maturation of 30S ribosomal subunits. This is Ribosome maturation factor RimP from Staphylococcus haemolyticus (strain JCSC1435).